Reading from the N-terminus, the 192-residue chain is dTTP/UTP pyrophosphatase (192 aa).

D75 acts as the Proton acceptor in catalysis.

Belongs to the Maf family. YhdE subfamily. A divalent metal cation is required as a cofactor.

Its subcellular location is the cytoplasm. The catalysed reaction is dTTP + H2O = dTMP + diphosphate + H(+). The enzyme catalyses UTP + H2O = UMP + diphosphate + H(+). Functionally, nucleoside triphosphate pyrophosphatase that hydrolyzes dTTP and UTP. May have a dual role in cell division arrest and in preventing the incorporation of modified nucleotides into cellular nucleic acids. This is dTTP/UTP pyrophosphatase from Pelodictyon phaeoclathratiforme (strain DSM 5477 / BU-1).